The chain runs to 162 residues: Peptide deformylase (162 aa).

Fe cation contacts are provided by C91 and H133. E134 is a catalytic residue. Fe cation is bound at residue H137.

Belongs to the polypeptide deformylase family. Fe(2+) serves as cofactor.

It carries out the reaction N-terminal N-formyl-L-methionyl-[peptide] + H2O = N-terminal L-methionyl-[peptide] + formate. Removes the formyl group from the N-terminal Met of newly synthesized proteins. Requires at least a dipeptide for an efficient rate of reaction. N-terminal L-methionine is a prerequisite for activity but the enzyme has broad specificity at other positions. The protein is Peptide deformylase of Finegoldia magna (strain ATCC 29328 / DSM 20472 / WAL 2508) (Peptostreptococcus magnus).